A 137-amino-acid chain; its full sequence is Golgin subfamily A member 7 (137 aa).

2 S-palmitoyl cysteine lipidation sites follow: C69 and C72.

This sequence belongs to the ERF4 family. As to quaternary structure, interacts with GOLGA3. Interacts with ZDHHC9. Post-translationally, palmitoylated on Cys-69 and Cys-72; which is required for Golgi localization and interaction with GOLGA3.

The protein resides in the golgi apparatus membrane. May be involved in protein transport from Golgi to cell surface. The ZDHHC9-GOLGA7 complex is a palmitoyltransferase specific for HRAS and NRAS. This Bos taurus (Bovine) protein is Golgin subfamily A member 7 (GOLGA7).